A 223-amino-acid chain; its full sequence is Suppressor of hydroxyurea sensitivity protein 2 (223 aa).

This sequence belongs to the SHU2 family. Component of the SHU complex composed of at least CSM2, PSY3, SHU1 and SHU2.

It is found in the nucleus. Plays a role in a RAD51/RAD54-dependent homologous recombination repair (HRR) pathway to repair MMS-induced lesions during S-phase. Required for error-free repair of spontaneous and induced DNA lesions to protect the genome from mutation. The chain is Suppressor of hydroxyurea sensitivity protein 2 (SHU2) from Saccharomyces cerevisiae (strain ATCC 204508 / S288c) (Baker's yeast).